A 310-amino-acid polypeptide reads, in one-letter code: N-acetyl-gamma-glutamyl-phosphate reductase (310 aa).

Cys117 is a catalytic residue.

It belongs to the NAGSA dehydrogenase family. Type 2 subfamily.

Its subcellular location is the cytoplasm. It catalyses the reaction N-acetyl-L-glutamate 5-semialdehyde + phosphate + NADP(+) = N-acetyl-L-glutamyl 5-phosphate + NADPH + H(+). The protein operates within amino-acid biosynthesis; L-arginine biosynthesis; N(2)-acetyl-L-ornithine from L-glutamate: step 3/4. In terms of biological role, catalyzes the NADPH-dependent reduction of N-acetyl-5-glutamyl phosphate to yield N-acetyl-L-glutamate 5-semialdehyde. The chain is N-acetyl-gamma-glutamyl-phosphate reductase from Sinorhizobium medicae (strain WSM419) (Ensifer medicae).